A 639-amino-acid chain; its full sequence is Chaperone protein DnaK (639 aa).

T198 carries the phosphothreonine; by autocatalysis modification. The disordered stretch occupies residues 604–639; sequence KSQAQGGDNADAGKQANAAADDVVDAEFEEVKDDKK. Over residues 606–624 the composition is skewed to low complexity; the sequence is QAQGGDNADAGKQANAAAD. Residues 625 to 639 show a composition bias toward acidic residues; it reads DVVDAEFEEVKDDKK.

Belongs to the heat shock protein 70 family.

Acts as a chaperone. The sequence is that of Chaperone protein DnaK from Shewanella baltica (strain OS223).